We begin with the raw amino-acid sequence, 1007 residues long: Tolloid-like protein 1 (1007 aa).

Residues 1-25 (MNMPSWLIFLLTGWTFCGNFFACGG) form the signal peptide. The propeptide occupies 26-142 (LDYDYPNYEN…GKSKKIRIPR (117 aa)). The interval 115–139 (SGQENTTANSQKVDNNQSGKSKKIR) is disordered. The segment covering 116–133 (GQENTTANSQKVDNNQSG) has biased composition (polar residues). One can recognise a Peptidase M12A domain in the interval 143 to 342 (AATSRTERIW…AQARKLYRCP (200 aa)). Asn164 carries N-linked (GlcNAc...) asparagine glycosylation. 4 cysteine pairs are disulfide-bonded: Cys185–Cys341, Cys205–Cys227, Cys207–Cys208, and Cys344–Cys370. His235 lines the Zn(2+) pocket. The active site involves Glu236. Zn(2+) is bound by residues His239 and His245. CUB domains follow at residues 344-456 (CGET…YEAI) and 457-569 (CGGE…FLKE). Residues Asn354 and Asn385 are each glycosylated (N-linked (GlcNAc...) asparagine). 15 disulfide bridges follow: Cys397–Cys419, Cys457–Cys483, Cys510–Cys532, Cys573–Cys585, Cys581–Cys594, Cys596–Cys609, Cys613–Cys639, Cys666–Cys688, Cys729–Cys740, Cys736–Cys749, Cys751–Cys764, Cys769–Cys795, Cys822–Cys844, Cys882–Cys912, and Cys939–Cys961. Residues 569-610 (EEDECARPDNGGCEQRCVNTLGSYKCSCDPGYELAPDKKSCE) form the EGF-like 1; calcium-binding domain. The CUB 3 domain maps to 613–725 (CGGLLTKLNG…KGFRAHFFSD (113 aa)). An N-linked (GlcNAc...) asparagine glycan is attached at Asn621. One can recognise an EGF-like 2; calcium-binding domain in the interval 725–765 (DKDECSKDNGGCQHECINTIGSYVCQCRNGFVLHDNKHDCK). 2 CUB domains span residues 769–881 (CEHR…HSTE) and 882–998 (CGGR…YRSV).

The cofactor is Zn(2+).

Its subcellular location is the secreted. Its function is as follows. Protease which processes procollagen C-propeptides, such as chordin. Required for the embryonic development. Predominant protease, which in the development, influences dorsal-ventral patterning and skeletogenesis. In Xenopus laevis (African clawed frog), this protein is Tolloid-like protein 1 (tll1).